The following is a 513-amino-acid chain: MALTLDACTLILKEHHLLKSVALNGDSNLNMTGIAYDSRKVTADTLFFCKGNFRPVFLTNAKEAGAVTYVAEQPIVEGNGMNALIVTNVQKAMAVLSAAFYDYPQDDLFIVAYTGTKGKTTASYFTQSILQDATNKKTALFSTIDRVLGPKPEDRFKSDLTTPESLDLFHDMRQAVENGMTHLVMEVSSQAYKKNRVYGLTFDVGFFLNISPDHVGPNEHPNFEDYLHCKLQLLVNSRHCVINAQTQNFGDVYAAATTTTEPENIYLFADTSYQPAQPVNIDFRFENQAMTLAESRFKVTAVSKKAIQLGVSGDYQLRLIGDFNESNATAAIIGAALGGADLIAAQQGIRRLQIPGRMETLAVEGHGQVYVDYAHNYASMKALLSFLQKEYNQPKLLVVVGSPGDKGVSRRAGFAQVLNEYADRAILTTDDPGYEDPATIAAEILAGIDQDKVDTTVEIDRATAIKQAIEESQPGDIVVLAAKGADAYQKVRGVDTPYPTDMVIAKQVAQQLS.

Serine 38 serves as a coordination point for UDP-N-acetyl-alpha-D-muramoyl-L-alanyl-D-glutamate. 115-121 (GTKGKTT) contributes to the ATP binding site. UDP-N-acetyl-alpha-D-muramoyl-L-alanyl-D-glutamate-binding positions include 161–162 (TT), serine 188, and arginine 196. N6-carboxylysine is present on lysine 230.

This sequence belongs to the MurCDEF family. MurE subfamily. Post-translationally, carboxylation is probably crucial for Mg(2+) binding and, consequently, for the gamma-phosphate positioning of ATP.

The protein resides in the cytoplasm. It functions in the pathway cell wall biogenesis; peptidoglycan biosynthesis. Its function is as follows. Catalyzes the addition of an amino acid to the nucleotide precursor UDP-N-acetylmuramoyl-L-alanyl-D-glutamate (UMAG) in the biosynthesis of bacterial cell-wall peptidoglycan. This chain is UDP-N-acetylmuramyl-tripeptide synthetase, found in Latilactobacillus sakei subsp. sakei (strain 23K) (Lactobacillus sakei subsp. sakei).